The primary structure comprises 297 residues: E3 ubiquitin-protein ligase RNF212B (297 aa).

The RING-type zinc finger occupies 6-40; the sequence is CNQCFRKDGAHFFVTSCGHIFCKKCMTLEKCAVCG. A coiled-coil region spans residues 87 to 136; the sequence is LLIAFYKDRITKLEAAVKEAQEMAASQNKELSALRKENGELKKILDILKG. Disordered stretches follow at residues 152-179 and 198-269; these read VGIT…RSSS and RGLH…ESLP. The span at 163–179 shows a compositional bias: low complexity; sequence PRPSSHHSSQVVSRSSS. A compositionally biased stretch (polar residues) spans 206 to 234; sequence PGDSYTETPSPASTHSLSYRPSSASSGQG.

In terms of assembly, homodimer. Post-translationally, autoubiquitinated.

It is found in the chromosome. The enzyme catalyses S-ubiquitinyl-[E2 ubiquitin-conjugating enzyme]-L-cysteine + [acceptor protein]-L-lysine = [E2 ubiquitin-conjugating enzyme]-L-cysteine + N(6)-ubiquitinyl-[acceptor protein]-L-lysine.. Its pathway is protein modification; protein ubiquitination. In terms of biological role, ubiquitin E3 ligase that acts as a crucial factor for crossing-over (CO) formation during meiosis. Essential for normal prophase I progression and for ensuring appropriate CO designation in meiosis. Recruits key components of the cross-over machinery either directly ou indirectly, leading to the activation of the MutL-gamma complex. The function of RNF212B in CO designation is dependent on its catalytic activity. This Mus musculus (Mouse) protein is E3 ubiquitin-protein ligase RNF212B (Rnf212b).